A 102-amino-acid chain; its full sequence is Small ribosomal subunit protein uS10 (102 aa).

It belongs to the universal ribosomal protein uS10 family. Part of the 30S ribosomal subunit.

In terms of biological role, involved in the binding of tRNA to the ribosomes. In Methanococcus maripaludis (strain C6 / ATCC BAA-1332), this protein is Small ribosomal subunit protein uS10.